A 425-amino-acid chain; its full sequence is Phosphoribosylamine--glycine ligase (425 aa).

Positions K110–E317 constitute an ATP-grasp domain. E137–S198 contributes to the ATP binding site. E287 and N289 together coordinate Mg(2+).

The protein belongs to the GARS family. Mg(2+) is required as a cofactor. The cofactor is Mn(2+).

The enzyme catalyses 5-phospho-beta-D-ribosylamine + glycine + ATP = N(1)-(5-phospho-beta-D-ribosyl)glycinamide + ADP + phosphate + H(+). It participates in purine metabolism; IMP biosynthesis via de novo pathway; N(1)-(5-phospho-D-ribosyl)glycinamide from 5-phospho-alpha-D-ribose 1-diphosphate: step 2/2. This chain is Phosphoribosylamine--glycine ligase, found in Chlorobaculum tepidum (strain ATCC 49652 / DSM 12025 / NBRC 103806 / TLS) (Chlorobium tepidum).